The primary structure comprises 119 residues: Large ribosomal subunit protein bL20 (119 aa).

It belongs to the bacterial ribosomal protein bL20 family.

Functionally, binds directly to 23S ribosomal RNA and is necessary for the in vitro assembly process of the 50S ribosomal subunit. It is not involved in the protein synthesizing functions of that subunit. The sequence is that of Large ribosomal subunit protein bL20 from Bradyrhizobium sp. (strain BTAi1 / ATCC BAA-1182).